Here is a 339-residue protein sequence, read N- to C-terminus: Erlin-2 (339 aa).

At 1–3 (MAQ) the chain is on the cytoplasmic side. The helical transmembrane segment at 4–24 (LGAVVAVASSFFCASLFSAVH) threads the bilayer. The Lumenal segment spans residues 25–339 (KIEEGHIGVY…EPLETATKEN (315 aa)). N106 carries an N-linked (GlcNAc...) asparagine glycan. The interval 177–309 (EAIRRNYELM…DIPNMFMDSA (133 aa)) is interaction with ERLIN1. K267 is subject to N6-acetyllysine.

Belongs to the band 7/mec-2 family. Forms a heteromeric complex with ERLIN1. In complex with ERLIN1, interacts with RNF170. Interacts with activated ITPR1, independently of the degree of ITPR1 polyubiquitination. Interacts with SCAP, INSIG1, SREBF1 and SREBF2 under cholesterol sufficiency conditions; indicative for an association with the SCAP-SREBP-INSIG complex. Probably part of an AMFR/gp78 and INSIG1-containing ubiquitin ligase complex involved in ERAD of HMGCR. Interacts with TMUB1; TMUB1 bridges the association with AMFR. Interacts with SYVN1 and RNF139. Interacts with TMEM259. Interacts with TMEM41B. In terms of processing, deubiquitinated by USP25; leading to stabilization. Ubiquitous.

It is found in the endoplasmic reticulum membrane. Its function is as follows. Component of the ERLIN1/ERLIN2 complex which mediates the endoplasmic reticulum-associated degradation (ERAD) of inositol 1,4,5-trisphosphate receptors (IP3Rs) such as ITPR1. Promotes sterol-accelerated ERAD of HMGCR probably implicating an AMFR/gp78-containing ubiquitin ligase complex. Involved in regulation of cellular cholesterol homeostasis by regulation the SREBP signaling pathway. May promote ER retention of the SCAP-SREBF complex. The chain is Erlin-2 (ERLIN2) from Homo sapiens (Human).